The chain runs to 129 residues: Bacteriohemerythrin (129 aa).

7 residues coordinate Fe cation: histidine 19, histidine 59, glutamate 63, histidine 78, histidine 82, histidine 119, and aspartate 124.

This sequence belongs to the hemerythrin family. Monomer.

In terms of biological role, oxygen-binding protein. May be involved in a storage mechanism or for delivery to oxygen-requiring enzymes. The oxygen-binding site contains two iron atoms. The chain is Bacteriohemerythrin from Clostridium acetobutylicum (strain ATCC 824 / DSM 792 / JCM 1419 / IAM 19013 / LMG 5710 / NBRC 13948 / NRRL B-527 / VKM B-1787 / 2291 / W).